A 275-amino-acid chain; its full sequence is Large ribosomal subunit protein uL2 (275 aa).

A disordered region spans residues 208 to 275; that stretch reads AGAKRWRGRR…NMIIRDRRKK (68 aa). Composition is skewed to basic residues over residues 209-219 and 254-263; these read GAKRWRGRRPT and KGYKTRRNKR.

This sequence belongs to the universal ribosomal protein uL2 family. As to quaternary structure, part of the 50S ribosomal subunit. Forms a bridge to the 30S subunit in the 70S ribosome.

Functionally, one of the primary rRNA binding proteins. Required for association of the 30S and 50S subunits to form the 70S ribosome, for tRNA binding and peptide bond formation. It has been suggested to have peptidyltransferase activity; this is somewhat controversial. Makes several contacts with the 16S rRNA in the 70S ribosome. This is Large ribosomal subunit protein uL2 from Coxiella burnetii (strain CbuK_Q154) (Coxiella burnetii (strain Q154)).